Consider the following 1018-residue polypeptide: Thrombospondin type-1 domain-containing protein 4 (1018 aa).

Residues Met1–Pro25 form the signal peptide. One can recognise a TSP type-1 1 domain in the interval Pro53–Pro307. Disordered stretches follow at residues Ser111–Leu235, Pro254–Ser279, and Ser534–Gln623. Positions Gln187–Arg200 are enriched in basic residues. The segment covering Ser201–Gly210 has biased composition (low complexity). Residues Leu259–Ser279 show a composition bias toward polar residues. Composition is skewed to basic and acidic residues over residues Arg556–Ala577 and Arg592–Asp603. TSP type-1 domains lie at Cys676–Ser737, Trp739–Pro792, Cys793–Thr851, Gly852–Pro911, and Cys912–Val968. Residues Val971 to Ala1008 enclose the PLAC domain.

In terms of assembly, interacts with FBN1. May interact with TGFB1.

Its subcellular location is the secreted. It localises to the extracellular space. The protein resides in the extracellular matrix. In terms of biological role, promotes FBN1 matrix assembly. Attenuates TGFB signaling, possibly by accelerating the sequestration of large latent complexes of TGFB or active TGFB by FBN1 microfibril assembly, thereby negatively regulating the expression of TGFB regulatory targets, such as POSTN. This Homo sapiens (Human) protein is Thrombospondin type-1 domain-containing protein 4 (THSD4).